A 776-amino-acid polypeptide reads, in one-letter code: MNTKILKALEFDKVKKQFTHFLQSEQGQMELNDLLPMTNQEKIERSFAEIADVAQIFQEYASFGFGHSQDISESLRRLELGADLNTQELLAVKRILQMSAELKDFYDNLENVDLQILDCLFEKIETFPDLQGSLQAINDGGFIEDFASPELTKIRHHIHQNEQQIRQILQEMLKKQGDLLAENLIASRSGRSVLPVKNTYRHRIAGVIHDISASGNTVYIEPRAVVNLNEEMTQARADERHEMTRILHDLSDRLRSQTDIIGNNAWLLGHIDFVRGKYLYMRENQASLPSLTTDQTIRLLSVRHPLLSNPIANDLHFEHDTTAILITGPNTGGKTIMLKTLGITQLMAQSGLPILADEGSKVAVFKDIFADIGDEQSIEQSLSTFSSHMTHIVEILQKANKDSLVLFDELGAGTDPQEGAALAMSILEHLRLSDIKTMITTHYPELKAYGIETEFIENASMEFDMVTLSPTYHFMQGVPGRSNAFEIARRLGLSEIIVAEAENLTNTDSDVNKIIERLENQTIESRRRLDNIREVEQENLKFNRAVKKLYNEFSHAQDKELRKAKLKAQEIVDKALAESDFILKNLQDKAQLKPHEIIEAKGKLKKLVPEIELSKNKVLKKAKKKRAAKVGDDIIVSSYGQRGTLTKRFKDGRWEAQVGLIKMTLQESEFDLVKSDKAQASQKRQAHLVKRTSQKAPSARLDLRGKRYEEAMQELDEFIDQALLNNMAQVDIIHGIGTGVIRDGVTKYLRRNKQVKEFGYAPQNAGGSGATIVTFK.

Residue 328–335 (GPNTGGKT) coordinates ATP. Positions 701 to 776 (LDLRGKRYEE…GSGATIVTFK (76 aa)) constitute a Smr domain.

Belongs to the DNA mismatch repair MutS family. MutS2 subfamily. In terms of assembly, homodimer. Binds to stalled ribosomes, contacting rRNA.

Endonuclease that is involved in the suppression of homologous recombination and thus may have a key role in the control of bacterial genetic diversity. Functionally, acts as a ribosome collision sensor, splitting the ribosome into its 2 subunits. Detects stalled/collided 70S ribosomes which it binds and splits by an ATP-hydrolysis driven conformational change. Acts upstream of the ribosome quality control system (RQC), a ribosome-associated complex that mediates the extraction of incompletely synthesized nascent chains from stalled ribosomes and their subsequent degradation. Probably generates substrates for RQC. This Streptococcus mutans serotype c (strain ATCC 700610 / UA159) protein is Endonuclease MutS2.